Reading from the N-terminus, the 191-residue chain is Fe/S biogenesis protein NfuA (191 aa).

Residues cysteine 149 and cysteine 152 each coordinate [4Fe-4S] cluster.

It belongs to the NfuA family. Homodimer. [4Fe-4S] cluster is required as a cofactor.

Functionally, involved in iron-sulfur cluster biogenesis. Binds a 4Fe-4S cluster, can transfer this cluster to apoproteins, and thereby intervenes in the maturation of Fe/S proteins. Could also act as a scaffold/chaperone for damaged Fe/S proteins. This chain is Fe/S biogenesis protein NfuA, found in Enterobacter sp. (strain 638).